Here is a 255-residue protein sequence, read N- to C-terminus: Pyrroloquinoline-quinone synthase (255 aa).

The protein belongs to the PqqC family.

The enzyme catalyses 6-(2-amino-2-carboxyethyl)-7,8-dioxo-1,2,3,4,7,8-hexahydroquinoline-2,4-dicarboxylate + 3 O2 = pyrroloquinoline quinone + 2 H2O2 + 2 H2O + H(+). It functions in the pathway cofactor biosynthesis; pyrroloquinoline quinone biosynthesis. Its function is as follows. Ring cyclization and eight-electron oxidation of 3a-(2-amino-2-carboxyethyl)-4,5-dioxo-4,5,6,7,8,9-hexahydroquinoline-7,9-dicarboxylic-acid to PQQ. This chain is Pyrroloquinoline-quinone synthase, found in Cereibacter sphaeroides (strain ATCC 17023 / DSM 158 / JCM 6121 / CCUG 31486 / LMG 2827 / NBRC 12203 / NCIMB 8253 / ATH 2.4.1.) (Rhodobacter sphaeroides).